The sequence spans 561 residues: Putative transport protein AHA_2450 (561 aa).

5 helical membrane-spanning segments follow: residues 8 to 28 (LLHQSDSLLLFVVLAFGLLLG), 37 to 57 (IGNTIGVLFTALLFGQMGFEF), 66 to 86 (FMLFIFCVGIEAGPHFFSVFL), 90 to 110 (IHYITLTLVILLTALFLTVGL), and 161 to 181 (NMGIGYALTYLVGLVGLMLVV). RCK C-terminal domains follow at residues 206–291 (SDNE…NYRN) and 293–376 (KEVF…KIGF). 5 consecutive transmembrane segments (helical) span residues 386-406 (LVAFTTFFVLGLLIGSVSLVF), 409-429 (LEFGLGNAVGLLLAGILMGYL), 450-470 (LGLAVFMVSTGLKAGGGILDH), 476-496 (AVVLFSGMLVTTLPVLVGYLF), and 541-561 (TYAVANVMLTLAGSFIIGFWF).

It belongs to the AAE transporter (TC 2.A.81) family. YbjL subfamily.

It is found in the cell membrane. The polypeptide is Putative transport protein AHA_2450 (Aeromonas hydrophila subsp. hydrophila (strain ATCC 7966 / DSM 30187 / BCRC 13018 / CCUG 14551 / JCM 1027 / KCTC 2358 / NCIMB 9240 / NCTC 8049)).